Consider the following 338-residue polypeptide: MEERILTQNFTQEDASEYSLRPRWLSEYIGQQKIKEELKIYIEAAKMRKEPLDHVLLYGPPGLGKTTLATVISNEMGVGIKITSGPAIEKSGDLAAILTNLQENDILFIDEIHRLNRSVEEILYPAMEDFELDIVIGKGPSARSIRLSLPRFTLIGATTRAALMTSPLRDRFGVINRLDYYSVEELKEIIKRSANILNIGIDEKAALEIAKRSRGTPRIANRLLKRVRDFAQVRGNGYIDFKTSKEALDVLGVDEIGLEYIDRKILVSIIEKFGGGPVGIDAIAASIGEDGDTIEDVYEPYLLQIGFLNRTPRGRVVTKLAYDYLKYPYIEQGRIEGV.

Residues 1–181 (MEERILTQNF…FGVINRLDYY (181 aa)) form a large ATPase domain (RuvB-L) region. ATP contacts are provided by residues Leu-20, Arg-21, Gly-62, Lys-65, Thr-66, Thr-67, 128-130 (EDF), Arg-171, Tyr-181, and Arg-218. Thr-66 contacts Mg(2+). Residues 182-252 (SVEELKEIIK…TSKEALDVLG (71 aa)) form a small ATPAse domain (RuvB-S) region. A head domain (RuvB-H) region spans residues 255–338 (EIGLEYIDRK…YIEQGRIEGV (84 aa)). Residues Arg-310 and Arg-315 each contribute to the DNA site.

Belongs to the RuvB family. As to quaternary structure, homohexamer. Forms an RuvA(8)-RuvB(12)-Holliday junction (HJ) complex. HJ DNA is sandwiched between 2 RuvA tetramers; dsDNA enters through RuvA and exits via RuvB. An RuvB hexamer assembles on each DNA strand where it exits the tetramer. Each RuvB hexamer is contacted by two RuvA subunits (via domain III) on 2 adjacent RuvB subunits; this complex drives branch migration. In the full resolvosome a probable DNA-RuvA(4)-RuvB(12)-RuvC(2) complex forms which resolves the HJ.

Its subcellular location is the cytoplasm. It catalyses the reaction ATP + H2O = ADP + phosphate + H(+). Functionally, the RuvA-RuvB-RuvC complex processes Holliday junction (HJ) DNA during genetic recombination and DNA repair, while the RuvA-RuvB complex plays an important role in the rescue of blocked DNA replication forks via replication fork reversal (RFR). RuvA specifically binds to HJ cruciform DNA, conferring on it an open structure. The RuvB hexamer acts as an ATP-dependent pump, pulling dsDNA into and through the RuvAB complex. RuvB forms 2 homohexamers on either side of HJ DNA bound by 1 or 2 RuvA tetramers; 4 subunits per hexamer contact DNA at a time. Coordinated motions by a converter formed by DNA-disengaged RuvB subunits stimulates ATP hydrolysis and nucleotide exchange. Immobilization of the converter enables RuvB to convert the ATP-contained energy into a lever motion, pulling 2 nucleotides of DNA out of the RuvA tetramer per ATP hydrolyzed, thus driving DNA branch migration. The RuvB motors rotate together with the DNA substrate, which together with the progressing nucleotide cycle form the mechanistic basis for DNA recombination by continuous HJ branch migration. Branch migration allows RuvC to scan DNA until it finds its consensus sequence, where it cleaves and resolves cruciform DNA. This Thermoanaerobacter pseudethanolicus (strain ATCC 33223 / 39E) (Clostridium thermohydrosulfuricum) protein is Holliday junction branch migration complex subunit RuvB.